A 57-amino-acid chain; its full sequence is Large ribosomal subunit protein uL30 (57 aa).

The protein belongs to the universal ribosomal protein uL30 family. Part of the 50S ribosomal subunit.

The chain is Large ribosomal subunit protein uL30 from Buchnera aphidicola subsp. Cinara cedri (strain Cc).